Here is a 74-residue protein sequence, read N- to C-terminus: Anaphase-promoting complex subunit 13 (74 aa).

The protein belongs to the APC13 family. As to quaternary structure, the APC/C is composed of at least 12 subunits.

The protein resides in the nucleus. It functions in the pathway protein modification; protein ubiquitination. Its function is as follows. Component of the anaphase promoting complex/cyclosome (APC/C), a cell cycle-regulated E3 ubiquitin ligase that controls progression through mitosis and the G1 phase of the cell cycle. The APC/C complex acts by mediating ubiquitination and subsequent degradation of target proteins: it mainly mediates the formation of 'Lys-11'-linked polyubiquitin chains and, to a lower extent, the formation of 'Lys-48'- and 'Lys-63'-linked polyubiquitin chains. The APC/C complex catalyzes assembly of branched 'Lys-11'-/'Lys-48'-linked branched ubiquitin chains on target proteins. The protein is Anaphase-promoting complex subunit 13 (anapc13) of Xenopus tropicalis (Western clawed frog).